A 159-amino-acid polypeptide reads, in one-letter code: Fimbrial protein MyfA (159 aa).

The N-terminal stretch at 1–29 is a signal peptide; that stretch reads MNMKKFVKKPLAIAVLMLASGGMVNMVHA.

Forms a homomer composed of subunits assembled in a large structure resistant to proteases and chaotropic agents.

The protein localises to the fimbrium. In terms of biological role, major pilus subunit. Expressed only in pathogenic serotypes, it is part of myf, a probable virulence factor. The chain is Fimbrial protein MyfA (myfA) from Yersinia enterocolitica.